The chain runs to 546 residues: Probable protein kinase UbiB (546 aa).

The Protein kinase domain maps to 124 to 502; it reads DFDIQPLASA…HVRQSQSRYL (379 aa). ATP-binding positions include 130–138 and K153; that span reads LASASIAQV. Catalysis depends on D288, which acts as the Proton acceptor. 2 consecutive transmembrane segments (helical) span residues 501–521 and 522–542; these read YLLGIGATLLLSGSFLLVNRP and EWGLMPSWLMVGGVVVWLVGW.

It belongs to the ABC1 family. UbiB subfamily.

It localises to the cell inner membrane. Its pathway is cofactor biosynthesis; ubiquinone biosynthesis [regulation]. Is probably a protein kinase regulator of UbiI activity which is involved in aerobic coenzyme Q (ubiquinone) biosynthesis. The chain is Probable protein kinase UbiB from Salmonella gallinarum (strain 287/91 / NCTC 13346).